Here is a 107-residue protein sequence, read N- to C-terminus: UPF0060 membrane protein Atu1058 (107 aa).

The next 4 membrane-spanning stretches (helical) occupy residues 5 to 25 (LIYV…WAWL), 32 to 52 (WILL…TLVA), 59 to 79 (AYAA…WGVE), and 85 to 105 (RWDI…LFGP).

This sequence belongs to the UPF0060 family.

It localises to the cell inner membrane. The protein is UPF0060 membrane protein Atu1058 of Agrobacterium fabrum (strain C58 / ATCC 33970) (Agrobacterium tumefaciens (strain C58)).